Reading from the N-terminus, the 179-residue chain is Ubiquitin-conjugating enzyme E2 C (179 aa).

A disordered region spans residues 1–31 (MASQNVDPAAASSVASRKGQESGTSAARGSV). Residues 30-179 (SVGKRLQQEL…YQKQVREKEI (150 aa)) form the UBC core domain. Catalysis depends on Cys114, which acts as the Glycyl thioester intermediate.

This sequence belongs to the ubiquitin-conjugating enzyme family. Component of the APC/C complex. In terms of processing, autoubiquitinated by the APC/C complex, leading to its degradation by the proteasome.

It catalyses the reaction S-ubiquitinyl-[E1 ubiquitin-activating enzyme]-L-cysteine + [E2 ubiquitin-conjugating enzyme]-L-cysteine = [E1 ubiquitin-activating enzyme]-L-cysteine + S-ubiquitinyl-[E2 ubiquitin-conjugating enzyme]-L-cysteine.. It carries out the reaction S-ubiquitinyl-[E1 ubiquitin-activating enzyme]-L-cysteine + [acceptor protein]-L-lysine = [E1 ubiquitin-activating enzyme]-L-cysteine + N(6)-monoubiquitinyl-[acceptor protein]-L-lysine.. The protein operates within protein modification; protein ubiquitination. Catalyzes the covalent attachment of ubiquitin to other proteins. Acts as an essential factor of the anaphase promoting complex/cyclosome (APC/C), a cell cycle-regulated ubiquitin ligase that controls progression through mitosis. Acts by initiating 'Lys-11'-linked polyubiquitin chains on APC/C substrates, leading to the degradation of APC/C substrates by the proteasome and promoting mitotic exit. This Xenopus laevis (African clawed frog) protein is Ubiquitin-conjugating enzyme E2 C (ube2c).